The chain runs to 211 residues: ATP-dependent Clp protease proteolytic subunit 1 (211 aa).

The Nucleophile role is filled by serine 107. Histidine 132 is an active-site residue.

Belongs to the peptidase S14 family. In terms of assembly, fourteen ClpP subunits assemble into 2 heptameric rings which stack back to back to give a disk-like structure with a central cavity, resembling the structure of eukaryotic proteasomes.

Its subcellular location is the cytoplasm. It carries out the reaction Hydrolysis of proteins to small peptides in the presence of ATP and magnesium. alpha-casein is the usual test substrate. In the absence of ATP, only oligopeptides shorter than five residues are hydrolyzed (such as succinyl-Leu-Tyr-|-NHMec, and Leu-Tyr-Leu-|-Tyr-Trp, in which cleavage of the -Tyr-|-Leu- and -Tyr-|-Trp bonds also occurs).. Functionally, cleaves peptides in various proteins in a process that requires ATP hydrolysis. Has a chymotrypsin-like activity. Plays a major role in the degradation of misfolded proteins. The polypeptide is ATP-dependent Clp protease proteolytic subunit 1 (Mycolicibacterium paratuberculosis (strain ATCC BAA-968 / K-10) (Mycobacterium paratuberculosis)).